The sequence spans 380 residues: Cytochrome b (380 aa).

4 helical membrane passes run 34-54, 78-99, 114-134, and 179-199; these read FGSL…LLAA, WLIR…YLHI, WNTG…GYVL, and FFTL…IHLT. Heme b contacts are provided by His84 and His98. Residues His183 and His197 each coordinate heme b. His202 contributes to the a ubiquinone binding site. Helical transmembrane passes span 227-247, 289-309, 321-341, and 348-368; these read LKDI…ALFS, LGGV…PLLH, FSQL…WVGS, and FIII…ILFP.

The protein belongs to the cytochrome b family. The cytochrome bc1 complex contains 11 subunits: 3 respiratory subunits (MT-CYB, CYC1 and UQCRFS1), 2 core proteins (UQCRC1 and UQCRC2) and 6 low-molecular weight proteins (UQCRH/QCR6, UQCRB/QCR7, UQCRQ/QCR8, UQCR10/QCR9, UQCR11/QCR10 and a cleavage product of UQCRFS1). This cytochrome bc1 complex then forms a dimer. The cofactor is heme b.

The protein localises to the mitochondrion inner membrane. Component of the ubiquinol-cytochrome c reductase complex (complex III or cytochrome b-c1 complex) that is part of the mitochondrial respiratory chain. The b-c1 complex mediates electron transfer from ubiquinol to cytochrome c. Contributes to the generation of a proton gradient across the mitochondrial membrane that is then used for ATP synthesis. The sequence is that of Cytochrome b (MT-CYB) from Antigone antigone (Sarus crane).